We begin with the raw amino-acid sequence, 1505 residues long: Probable serine/threonine-protein kinase DDB_G0280133 (1505 aa).

3 PAS domains span residues 2 to 72, 108 to 178, and 215 to 284; these read NTHN…FETG, RMFI…YHGG, and DMFK…TDSH. Disordered stretches follow at residues 282 to 348 and 398 to 533; these read DSHD…FNHS and RVYG…ESSY. Composition is skewed to low complexity over residues 289 to 314 and 328 to 344; these read QQQQQTTTTTTTTTTTTSTTSTTTST and SSPPIDSPLTTPSTPTT. 2 stretches are compositionally biased toward basic and acidic residues: residues 398-407 and 415-430; these read RVYGKDKDKN and ENKDGKQLDTIKESKE. Residues 431 to 443 show a composition bias toward basic residues; that stretch reads HRHSKEKKKRKKD. Positions 448-468 are enriched in low complexity; that stretch reads NNNNNNNNNNNNNNEQTSDSS. Basic residues predominate over residues 479–489; that stretch reads SKKKRSSKKKS. Positions 515–532 are enriched in low complexity; that stretch reads SSNSSSNSSHSNAPHESS. The Protein kinase domain maps to 542 to 805; that stretch reads YTLGKTLGRG…IMNVLNHPWL (264 aa). ATP-binding positions include 548-556 and lysine 571; that span reads LGRGNYGVV. Residue aspartate 684 is the Proton acceptor of the active site. Residues 855–960 are compositionally biased toward low complexity; it reads NILNNNNNNN…NNTNSIINNN (106 aa). Disordered regions lie at residues 855–1048, 1072–1091, and 1181–1358; these read NILN…SHQQ, QPNQQVSFDTNQSYQQQLQQ, and QQQQ…DEEN. Residues 903-939 are a coiled coil; it reads NNNNNINNNINNNNNVNNNVNNNKNNNNNNNNNSNNN. The segment covering 961 to 974 has biased composition (polar residues); sequence LYNQSLSPQNNNIY. Composition is skewed to low complexity over residues 975 to 1013 and 1022 to 1048; these read QHSPQHQQHQHQQQHSPQQQQHQQHQHHQQQQQQLQQQH and QQHQQQHQQQHQQQHQQHQQHQQSHQQ. Residues 1072-1082 are compositionally biased toward polar residues; it reads QPNQQVSFDTN. A coiled-coil region spans residues 1125–1189; it reads IQQIQQLQQQ…QQQQQQQQND (65 aa). The segment covering 1202-1271 has biased composition (basic and acidic residues); it reads SKRDNSYNKR…NSRDNNRYNN (70 aa). Residues 1272-1282 are compositionally biased toward low complexity; the sequence is RDNNNNNNSNN. Basic and acidic residues-rich tracts occupy residues 1283-1301 and 1313-1326; these read NRERDRYKKNKNENFDYGK and NKDKPNIVREKPDF. Polar residues predominate over residues 1331 to 1347; that stretch reads SLKNDSSSNYGTISSGR. The FHA domain occupies 1399 to 1463; the sequence is FLFGRNRDIA…NGTFLKGEKI (65 aa).

It belongs to the protein kinase superfamily. CAMK Ser/Thr protein kinase family. SNF1 subfamily.

The enzyme catalyses L-seryl-[protein] + ATP = O-phospho-L-seryl-[protein] + ADP + H(+). It catalyses the reaction L-threonyl-[protein] + ATP = O-phospho-L-threonyl-[protein] + ADP + H(+). The chain is Probable serine/threonine-protein kinase DDB_G0280133 from Dictyostelium discoideum (Social amoeba).